Here is an 85-residue protein sequence, read N- to C-terminus: Coiled-coil-helix-coiled-coil-helix domain-containing protein 7 (85 aa).

Positions 13-55 (INPCLSESDASTRCLDENNYDKERCSTYFLKYKNCRKFWHSIM) constitute a CHCH domain. 2 short sequence motifs (cx9C motif) span residues 16–26 (CLSESDASTRC) and 37–47 (CSTYFLKYKNC). 2 cysteine pairs are disulfide-bonded: Cys-16/Cys-47 and Cys-26/Cys-37.

The protein belongs to the CHCHD7 family. In terms of assembly, monomer.

It is found in the mitochondrion intermembrane space. This Macaca fascicularis (Crab-eating macaque) protein is Coiled-coil-helix-coiled-coil-helix domain-containing protein 7 (CHCHD7).